The following is a 366-amino-acid chain: tRNA/tmRNA (uracil-C(5))-methyltransferase (366 aa).

S-adenosyl-L-methionine is bound by residues Gln190, Tyr218, Asn223, Glu239, and Asp299. Cys324 acts as the Nucleophile in catalysis. The active-site Proton acceptor is the Glu358.

Belongs to the class I-like SAM-binding methyltransferase superfamily. RNA M5U methyltransferase family. TrmA subfamily.

The catalysed reaction is uridine(54) in tRNA + S-adenosyl-L-methionine = 5-methyluridine(54) in tRNA + S-adenosyl-L-homocysteine + H(+). It catalyses the reaction uridine(341) in tmRNA + S-adenosyl-L-methionine = 5-methyluridine(341) in tmRNA + S-adenosyl-L-homocysteine + H(+). Functionally, dual-specificity methyltransferase that catalyzes the formation of 5-methyluridine at position 54 (m5U54) in all tRNAs, and that of position 341 (m5U341) in tmRNA (transfer-mRNA). The chain is tRNA/tmRNA (uracil-C(5))-methyltransferase from Salmonella paratyphi A (strain ATCC 9150 / SARB42).